A 173-amino-acid chain; its full sequence is Crossover junction endodeoxyribonuclease RuvC (173 aa).

Catalysis depends on residues Asp8, Glu67, and Asp139. Mg(2+) contacts are provided by Asp8, Glu67, and Asp139.

It belongs to the RuvC family. In terms of assembly, homodimer which binds Holliday junction (HJ) DNA. The HJ becomes 2-fold symmetrical on binding to RuvC with unstacked arms; it has a different conformation from HJ DNA in complex with RuvA. In the full resolvosome a probable DNA-RuvA(4)-RuvB(12)-RuvC(2) complex forms which resolves the HJ. Requires Mg(2+) as cofactor.

It localises to the cytoplasm. The enzyme catalyses Endonucleolytic cleavage at a junction such as a reciprocal single-stranded crossover between two homologous DNA duplexes (Holliday junction).. In terms of biological role, the RuvA-RuvB-RuvC complex processes Holliday junction (HJ) DNA during genetic recombination and DNA repair. Endonuclease that resolves HJ intermediates. Cleaves cruciform DNA by making single-stranded nicks across the HJ at symmetrical positions within the homologous arms, yielding a 5'-phosphate and a 3'-hydroxyl group; requires a central core of homology in the junction. The consensus cleavage sequence is 5'-(A/T)TT(C/G)-3'. Cleavage occurs on the 3'-side of the TT dinucleotide at the point of strand exchange. HJ branch migration catalyzed by RuvA-RuvB allows RuvC to scan DNA until it finds its consensus sequence, where it cleaves and resolves the cruciform DNA. The protein is Crossover junction endodeoxyribonuclease RuvC of Vibrio vulnificus (strain YJ016).